Consider the following 333-residue polypeptide: Protoheme IX farnesyltransferase (333 aa).

The next 7 helical transmembrane spans lie at 64 to 84 (LICTLGGGALAAAAAGALNCL), 110 to 130 (TVFLAAVSCTLAASMLLISGV), 133 to 153 (LAAGLTLLGLCSYVILYTVIL), 161 to 181 (IVFGGVAGAIPPLVGASAATG), 189 to 209 (WLFGLVMLWTPAHFWALAILL), 246 to 266 (IMGVFALPEGGLLYGIMLLPF), and 287 to 307 (AKSLFRWSILYMFGICLLLLI).

Belongs to the UbiA prenyltransferase family. Protoheme IX farnesyltransferase subfamily.

The protein localises to the cell inner membrane. The enzyme catalyses heme b + (2E,6E)-farnesyl diphosphate + H2O = Fe(II)-heme o + diphosphate. Its pathway is porphyrin-containing compound metabolism; heme O biosynthesis; heme O from protoheme: step 1/1. In terms of biological role, converts heme B (protoheme IX) to heme O by substitution of the vinyl group on carbon 2 of heme B porphyrin ring with a hydroxyethyl farnesyl side group. This chain is Protoheme IX farnesyltransferase, found in Prochlorococcus marinus (strain MIT 9312).